A 339-amino-acid chain; its full sequence is Phenylalanine--tRNA ligase alpha subunit (339 aa).

Position 254 (glutamate 254) interacts with Mg(2+).

This sequence belongs to the class-II aminoacyl-tRNA synthetase family. Phe-tRNA synthetase alpha subunit type 1 subfamily. Tetramer of two alpha and two beta subunits. It depends on Mg(2+) as a cofactor.

The protein resides in the cytoplasm. It carries out the reaction tRNA(Phe) + L-phenylalanine + ATP = L-phenylalanyl-tRNA(Phe) + AMP + diphosphate + H(+). The polypeptide is Phenylalanine--tRNA ligase alpha subunit (Acetivibrio thermocellus (strain ATCC 27405 / DSM 1237 / JCM 9322 / NBRC 103400 / NCIMB 10682 / NRRL B-4536 / VPI 7372) (Clostridium thermocellum)).